Consider the following 239-residue polypeptide: U-scoloptoxin(11)-Sm3a (239 aa).

Residues 1–16 (MINFLLLVLILSVLES) form the signal peptide.

It belongs to the scoloptoxin-11 family. Contains 9 disulfide bonds. As to expression, expressed by the venom gland.

Its subcellular location is the secreted. In Scolopendra morsitans (Tanzanian blue ringleg centipede), this protein is U-scoloptoxin(11)-Sm3a.